A 72-amino-acid polypeptide reads, in one-letter code: Large ribosomal subunit protein uL29 (72 aa).

The protein belongs to the universal ribosomal protein uL29 family.

This Caldicellulosiruptor bescii (strain ATCC BAA-1888 / DSM 6725 / KCTC 15123 / Z-1320) (Anaerocellum thermophilum) protein is Large ribosomal subunit protein uL29.